The sequence spans 343 residues: Probable dual-specificity RNA methyltransferase RlmN (343 aa).

The active-site Proton acceptor is the glutamate 91. In terms of domain architecture, Radical SAM core spans 97–326 (HPDRITACIS…AEIRREKGSD (230 aa)). A disulfide bridge links cysteine 104 with cysteine 331. [4Fe-4S] cluster-binding residues include cysteine 111, cysteine 115, and cysteine 118. S-adenosyl-L-methionine contacts are provided by residues 158-159 (GE), serine 190, 213-215 (SLH), and asparagine 289. Catalysis depends on cysteine 331, which acts as the S-methylcysteine intermediate.

Belongs to the radical SAM superfamily. RlmN family. [4Fe-4S] cluster serves as cofactor.

The protein resides in the cytoplasm. The enzyme catalyses adenosine(2503) in 23S rRNA + 2 reduced [2Fe-2S]-[ferredoxin] + 2 S-adenosyl-L-methionine = 2-methyladenosine(2503) in 23S rRNA + 5'-deoxyadenosine + L-methionine + 2 oxidized [2Fe-2S]-[ferredoxin] + S-adenosyl-L-homocysteine. The catalysed reaction is adenosine(37) in tRNA + 2 reduced [2Fe-2S]-[ferredoxin] + 2 S-adenosyl-L-methionine = 2-methyladenosine(37) in tRNA + 5'-deoxyadenosine + L-methionine + 2 oxidized [2Fe-2S]-[ferredoxin] + S-adenosyl-L-homocysteine. Specifically methylates position 2 of adenine 2503 in 23S rRNA and position 2 of adenine 37 in tRNAs. In Thermotoga sp. (strain RQ2), this protein is Probable dual-specificity RNA methyltransferase RlmN.